The primary structure comprises 123 residues: U11/U12 small nuclear ribonucleoprotein 25 kDa protein (123 aa).

The Ubiquitin-like domain maps to 32–123 (MTVRVCKMDG…VSFIKKLRQK (92 aa)).

As to quaternary structure, component of the U11/U12 snRNPs that are part of the U12-type spliceosome.

The protein resides in the nucleus. The polypeptide is U11/U12 small nuclear ribonucleoprotein 25 kDa protein (SNRNP25) (Bos taurus (Bovine)).